The chain runs to 123 residues: UPF0738 protein BCE_1319 (123 aa).

This sequence belongs to the UPF0738 family.

This chain is UPF0738 protein BCE_1319, found in Bacillus cereus (strain ATCC 10987 / NRS 248).